We begin with the raw amino-acid sequence, 468 residues long: FAD-linked oxidoreductase azaG (468 aa).

Residues 1–16 (MQLSGILSWLLSWLWA) form the signal peptide. N-linked (GlcNAc...) asparagine glycosylation is present at Asn-44. Residues 54–228 (TVHGAPHYLG…TSATYRTHQA (175 aa)) form the FAD-binding PCMH-type domain. N-linked (GlcNAc...) asparagine glycans are attached at residues Asn-272, Asn-348, and Asn-464.

It belongs to the oxygen-dependent FAD-linked oxidoreductase family. FAD is required as a cofactor.

It participates in secondary metabolite biosynthesis. In terms of biological role, FAD-linked oxidoreductase; part of the gene cluster that mediates the biosynthesis of azaphilones, a class of fungal metabolites characterized by a highly oxygenated pyrano-quinone bicyclic core and exhibiting a broad range of bioactivities. In the first step, the non-reducing polyketide synthase azaA forms the hexaketide precursor from successive condensations of five malonyl-CoA units, presumably with a simple acetyl-CoA starter unit. The reactive polyketide chain then undergoes a PT-mediated C2-C7 cyclization to afford the aromatic ring and is eventually released as an aldehyde through the R-domain. The putative ketoreductase azaE is proposed to catalyze the reduction of the terminal ketone resulting in the early culture product FK17-P2a. The monooxygenase azaH was demonstrated to be the only enzyme required to convert FK17-P2a to azanigerone E. AzaH first hydroxylates the benzaldehyde intermediate FK17-P2a at C4, which triggers the formation of the pyran-ring to afford azanigerone E. In parallel, the 2,4-dimethylhexanoyl chain is synthesized by the HR-PKS azaB and is proposed to be transferred to the C4-hydroxyl of azanigerone E by the acyltransferase azaD directly from the ACP domain of azaB. Alternatively, the 2,4-dimethyl-hexanoyl chain may be offloaded from the HR-PKS as a carboxylic acid and converted to an acyl-CoA by azaF. The resulting acyl-CoA molecule could then be taken up as a substrate by AzaD to form azanigerone B. To yield the carboxylic acid substituent in azanigerone A, the hydroxypropyl side chain of azanigerone B would need to undergo a C-C oxidative cleavage catalyzed by cytochrome P450 AzaI. AzaI is proposed to act on a vicinal diol that leads to a C-C bond scission either through an alkoxyradical intermediate or a peroxy complex. In the biosynthesis of azanigerone A, azanigerone B first undergoes hydroxylation at C10, possibly catalyzed by one of the two FAD-dependent monooxygenases encoded in the cluster, azaG or azaL, resulting in the vicinal diol azanigerone C. Oxidative cleavage of azanigerone C by azaI would yield the corresponding aldehyde derivative of azanigerone A. Finally, the dehydrogenase azaJ is proposed to convert the aldehyde functional group into the carboxylic acid, completing the conversion from azanigerone B to azanigerone A. Alternatively, the oxidation of aldehyde to carboxylic acid may be catalyzed by the same P450 enzyme azaI via consecutive oxidation or by endogenous alcohol dehydrogenase. The polypeptide is FAD-linked oxidoreductase azaG (Aspergillus niger (strain ATCC 1015 / CBS 113.46 / FGSC A1144 / LSHB Ac4 / NCTC 3858a / NRRL 328 / USDA 3528.7)).